A 46-amino-acid polypeptide reads, in one-letter code: uncharacterized protein (46 aa).

This is an uncharacterized protein from Escherichia coli (strain K12).